Here is a 139-residue protein sequence, read N- to C-terminus: Small ribosomal subunit protein eS6 (139 aa).

The protein belongs to the eukaryotic ribosomal protein eS6 family.

The chain is Small ribosomal subunit protein eS6 from Methanosarcina barkeri (strain Fusaro / DSM 804).